The chain runs to 341 residues: RNA 3'-terminal phosphate cyclase (341 aa).

ATP is bound by residues glutamine 102 and histidine 283–glutamine 287. Histidine 308 serves as the catalytic Tele-AMP-histidine intermediate.

This sequence belongs to the RNA 3'-terminal cyclase family. Type 1 subfamily.

It localises to the cytoplasm. It carries out the reaction a 3'-end 3'-phospho-ribonucleotide-RNA + ATP = a 3'-end 2',3'-cyclophospho-ribonucleotide-RNA + AMP + diphosphate. Its function is as follows. Catalyzes the conversion of 3'-phosphate to a 2',3'-cyclic phosphodiester at the end of RNA. The mechanism of action of the enzyme occurs in 3 steps: (A) adenylation of the enzyme by ATP; (B) transfer of adenylate to an RNA-N3'P to produce RNA-N3'PP5'A; (C) and attack of the adjacent 2'-hydroxyl on the 3'-phosphorus in the diester linkage to produce the cyclic end product. The biological role of this enzyme is unknown but it is likely to function in some aspects of cellular RNA processing. This is RNA 3'-terminal phosphate cyclase from Pseudomonas aeruginosa (strain UCBPP-PA14).